Consider the following 458-residue polypeptide: UDP-N-acetylmuramate--L-alanine ligase (458 aa).

Residue G115–T121 participates in ATP binding.

This sequence belongs to the MurCDEF family.

The protein resides in the cytoplasm. The enzyme catalyses UDP-N-acetyl-alpha-D-muramate + L-alanine + ATP = UDP-N-acetyl-alpha-D-muramoyl-L-alanine + ADP + phosphate + H(+). The protein operates within cell wall biogenesis; peptidoglycan biosynthesis. Functionally, cell wall formation. In Anaeromyxobacter dehalogenans (strain 2CP-1 / ATCC BAA-258), this protein is UDP-N-acetylmuramate--L-alanine ligase.